The sequence spans 324 residues: Cysteine-rich repeat secretory protein 9 (324 aa).

An N-terminal signal peptide occupies residues 1–27 (MARIIITLTIPLFYFFFFSLLSHQTMS). Gnk2-homologous domains lie at 29-132 (PDHI…NVSF) and 138-248 (IVPS…TSVL). The tract at residues 251–286 (PPPSPSAPPPRSPPPKSSPPSSLPQTPSPPLVFTPP) is disordered.

It belongs to the cysteine-rich repeat secretory protein family.

It localises to the secreted. This Arabidopsis thaliana (Mouse-ear cress) protein is Cysteine-rich repeat secretory protein 9 (CRRSP9).